Consider the following 515-residue polypeptide: Maturase K (515 aa).

Belongs to the intron maturase 2 family. MatK subfamily.

It is found in the plastid. It localises to the chloroplast. Usually encoded in the trnK tRNA gene intron. Probably assists in splicing its own and other chloroplast group II introns. The chain is Maturase K from Pinus densiflora (Japanese red pine).